We begin with the raw amino-acid sequence, 200 residues long: Superoxide dismutase [Fe] (200 aa).

Residues H28, H80, D162, and H166 each contribute to the Fe cation site.

The protein belongs to the iron/manganese superoxide dismutase family. In terms of assembly, homodimer. It depends on Fe cation as a cofactor.

The enzyme catalyses 2 superoxide + 2 H(+) = H2O2 + O2. Destroys superoxide anion radicals which are normally produced within the cells and which are toxic to biological systems. In Nostoc sp. (strain PCC 7120 / SAG 25.82 / UTEX 2576), this protein is Superoxide dismutase [Fe] (sodB).